A 486-amino-acid chain; its full sequence is Glycogen synthase (486 aa).

An ADP-alpha-D-glucose-binding site is contributed by Lys-20.

This sequence belongs to the glycosyltransferase 1 family. Bacterial/plant glycogen synthase subfamily.

The enzyme catalyses [(1-&gt;4)-alpha-D-glucosyl](n) + ADP-alpha-D-glucose = [(1-&gt;4)-alpha-D-glucosyl](n+1) + ADP + H(+). It participates in glycan biosynthesis; glycogen biosynthesis. Its function is as follows. Synthesizes alpha-1,4-glucan chains using ADP-glucose. This is Glycogen synthase from Aeromonas salmonicida (strain A449).